The sequence spans 426 residues: Homeobox protein knotted-1-like LET12 (426 aa).

Disordered regions lie at residues 1–26 (MEFQ…QQNA), 85–158 (QTSN…ENSW), and 270–290 (GVAP…DQAD). Low complexity predominate over residues 15 to 24 (QQQQQQQQQQ). A compositionally biased stretch (gly residues) spans 104-114 (AGGGSNGGGSG). Residues 139-151 (ENNNNNNNNNNNN) are compositionally biased toward low complexity. The region spanning 327-347 (ELKHELKQGYKEKIVDIREEI) is the ELK domain. The segment at residues 348–411 (LRKRRAGKLP…NQRKRNWHSN (64 aa)) is a DNA-binding region (homeobox; TALE-type). The tract at residues 406–426 (RNWHSNPSTSSSQKSQTQECR) is disordered. Positions 413 to 426 (STSSSQKSQTQECR) are enriched in low complexity.

It belongs to the TALE/KNOX homeobox family. Ubiquitously expressed in the mature plant.

The protein resides in the nucleus. In terms of biological role, may have a role to play in formative events in ovule and embryo morphogenesis. The protein is Homeobox protein knotted-1-like LET12 (LET12) of Solanum lycopersicum (Tomato).